Reading from the N-terminus, the 449-residue chain is Packaging protein 1 (449 aa).

Residues 1 to 77 (METRGRRPAA…QPAKRGDMLD (77 aa)) are disordered. 171–178 (GPTGCGKS) contributes to the ATP binding site. The DNA-binding stretch occupies residues 440–449 (RAYRARKTPK).

This sequence belongs to the adenoviridae packaging protein 1 family. Homodimer. Part of a genome packaging complex composed of packaging proteins 1, 2 and 3; this complex specifically binds to the packaging sequence on the left end of viral genomic DNA and performs packaging of the viral genome. Interacts with protein 33K.

It localises to the virion. It is found in the host nucleus. The protein localises to the host nucleoplasm. Its subcellular location is the host nucleolus. Its function is as follows. Component of the packaging machinery which encapsidates the viral DNA into preformed capsids and transcriptional activator of the viral major late promoter (MLP). Binds, along with packaging proteins 2 and 3, to the specific packaging sequence on the left end of viral genomic DNA and displays ATPase activity thereby providing the power stroke of the packaging machinery. The activity of packaging protein IVa2 is stimulated by protein 33K which acts as a terminase. May be the protein that pumps DNA into the capsid powered by ATP hydrolysis. Specifically binds to the 5'-CG-3' nucleotides of the repeats making up the packaging sequence. Component of the DEF-A and DEF-B transcription factors that bind downstream elements of the major late promoter (MLP), and stimulate transcription from the MLP after initiation of viral DNA replication. DEF-A is a heterodimer packaging proteins 1 and 2 and DEF-B is a homodimer of packaging protein 1. This is Packaging protein 1 from Homo sapiens (Human).